The chain runs to 147 residues: Putative protein adenylyltransferase MJ1305 (147 aa).

Residues 32-46 (GSYARGTAVEYSDVD) carry the GSX(10)DXD motif motif. Residues aspartate 44 and aspartate 46 each coordinate Mg(2+).

This sequence belongs to the MntA antitoxin family. It depends on Mg(2+) as a cofactor.

The catalysed reaction is L-tyrosyl-[protein] + ATP = O-(5'-adenylyl)-L-tyrosyl-[protein] + diphosphate. It carries out the reaction O-(5'-adenylyl)-L-tyrosyl-[protein] + ATP = O-[5'-(adenylyl-(5'-&gt;3')-adenylyl)]-L-tyrosyl-[protein] + diphosphate. Its function is as follows. Putative antitoxin component of a putative type VII toxin-antitoxin (TA) system. Its cognate toxin might be MJ1304, which it might AMPylate. The sequence is that of Putative protein adenylyltransferase MJ1305 from Methanocaldococcus jannaschii (strain ATCC 43067 / DSM 2661 / JAL-1 / JCM 10045 / NBRC 100440) (Methanococcus jannaschii).